Consider the following 82-residue polypeptide: Toxin Tpa7 (82 aa).

The N-terminal stretch at 1–20 is a signal peptide; sequence MKGMILLISCLMLIEVVVEC. The 62-residue stretch at 21-82 folds into the LCN-type CS-alpha/beta domain; that stretch reads KEGYPLDTLN…KIWDLKKNKC (62 aa). Intrachain disulfides connect Cys32–Cys82, Cys36–Cys58, Cys44–Cys63, and Cys48–Cys65.

Belongs to the long (4 C-C) scorpion toxin superfamily. Sodium channel inhibitor family. Beta subfamily. In terms of tissue distribution, expressed by the venom gland.

Its subcellular location is the secreted. Its function is as follows. Beta toxins bind voltage-independently at site-4 of sodium channels (Nav) and shift the voltage of activation toward more negative potentials thereby affecting sodium channel activation and promoting spontaneous and repetitive firing. The sequence is that of Toxin Tpa7 from Tityus pachyurus (Colombian scorpion).